The following is a 432-amino-acid chain: DNA damage-binding protein 2 (432 aa).

Positions methionine 1–glutamate 31 are disordered. N6-acetyllysine occurs at positions 35 and 77. Required for interaction with DDB1 stretches follow at residues serine 68 to glycine 79 and glutamine 87 to leucine 98. WD repeat units follow at residues serine 116 to lysine 151, isoleucine 159 to tyrosine 194, tryptophan 203 to leucine 238, lysine 244 to histidine 287, and proline 290 to histidine 329. Residues tryptophan 256–glutamine 274 carry the DWD box motif. The photolesion recognition stretch occupies residues phenylalanine 334 to histidine 336. WD repeat units follow at residues threonine 343–leucine 386 and serine 396–glutamine 420.

This sequence belongs to the WD repeat DDB2/WDR76 family. In terms of assembly, component of the UV-DDB complex which includes DDB1 and DDB2. The UV-DDB complex interacts with monoubiquitinated histone H2A and binds to XPC via the DDB2 subunit. Component of the DCX (DDB1-CUL4-X-box) E3 ubiquitin-protein ligase complex DDB1-CUL4-ROC1 (also known as CUL4-DDB-ROC1 and CUL4-DDB-RBX1), which includes CUL4A or CUL4B, DDB1, DDB2 and RBX1. DDB2 may function as the substrate recognition module within this complex. The DDB1-CUL4-ROC1 complex may associate with the COP9 signalosome, and this inhibits the E3 ubiquitin-protein ligase activity of the complex. A large number of other DCX complexes may also exist in which an alternate substrate targeting subunit replaces DDB2. These targeting subunits are generally known as DCAF (DDB1- and CUL4-associated factor) or CDW (CUL4-DDB1-associated WD40-repeat) proteins. In terms of processing, phosphorylation by ABL1 negatively regulate UV-DDB activity. Post-translationally, ubiquitinated by CUL4A in response to UV irradiation. Ubiquitination appears to both impair DNA-binding and promotes ubiquitin-dependent proteolysis. Degradation of DDB2 at sites of DNA damage may be a prerequisite for their recognition by XPC and subsequent repair. CUL4A-mediated degradation appears to be promoted by ABL1. Ubiquitinated, leading to proteasomal degradation, and deubiquitinated by USP24. Deubiquitinated by USP44; leading to its stabilization on DNA lesions. In terms of processing, acetylated. Deacetylation by SIRT6 in response to UV stress facilitates nucleotide excision repair pathway (the NER pathway) transduction. In terms of tissue distribution, expressed in bone marrow, liver, lung, muscle, pancreas and spleen.

The protein resides in the nucleus. The protein localises to the chromosome. The protein operates within protein modification; protein ubiquitination. Functionally, protein, which is both involved in DNA repair and protein ubiquitination, as part of the UV-DDB complex and DCX (DDB1-CUL4-X-box) complexes, respectively. Core component of the UV-DDB complex (UV-damaged DNA-binding protein complex), a complex that recognizes UV-induced DNA damage and recruit proteins of the nucleotide excision repair pathway (the NER pathway) to initiate DNA repair. The UV-DDB complex preferentially binds to cyclobutane pyrimidine dimers (CPD), 6-4 photoproducts (6-4 PP), apurinic sites and short mismatches. Also functions as the substrate recognition module for the DCX (DDB2-CUL4-X-box) E3 ubiquitin-protein ligase complex DDB2-CUL4-ROC1 (also known as CUL4-DDB-ROC1 and CUL4-DDB-RBX1). The DDB2-CUL4-ROC1 complex may ubiquitinate histone H2A, histone H3 and histone H4 at sites of UV-induced DNA damage. The ubiquitination of histones may facilitate their removal from the nucleosome and promote subsequent DNA repair. The DDB2-CUL4-ROC1 complex also ubiquitinates XPC, which may enhance DNA-binding by XPC and promote NER. The DDB2-CUL4-ROC1 complex also ubiquitinates KAT7/HBO1 in response to DNA damage, leading to its degradation: recognizes KAT7/HBO1 following phosphorylation by ATR. The polypeptide is DNA damage-binding protein 2 (Ddb2) (Mus musculus (Mouse)).